The primary structure comprises 769 residues: Probable beta-glucosidase M (769 aa).

The signal sequence occupies residues 1 to 22 (MHSNLGLAGLAGLLATASVCLS). N-linked (GlcNAc...) asparagine glycosylation is found at asparagine 28, asparagine 75, and asparagine 262. Aspartate 290 is an active-site residue. Asparagine 318, asparagine 325, asparagine 437, and asparagine 546 each carry an N-linked (GlcNAc...) asparagine glycan.

Belongs to the glycosyl hydrolase 3 family.

The protein localises to the secreted. It catalyses the reaction Hydrolysis of terminal, non-reducing beta-D-glucosyl residues with release of beta-D-glucose.. It participates in glycan metabolism; cellulose degradation. In terms of biological role, beta-glucosidases are one of a number of cellulolytic enzymes involved in the degradation of cellulosic biomass. Catalyzes the last step releasing glucose from the inhibitory cellobiose. This Neosartorya fischeri (strain ATCC 1020 / DSM 3700 / CBS 544.65 / FGSC A1164 / JCM 1740 / NRRL 181 / WB 181) (Aspergillus fischerianus) protein is Probable beta-glucosidase M (bglM).